Reading from the N-terminus, the 69-residue chain is Disintegrin EC6 subunit beta (69 aa).

The region spanning 1-65 (NSVHPCCDPV…DCPPNPWNGK (65 aa)) is the Disintegrin domain. 4 cysteine pairs are disulfide-bonded: Cys6/Cys29, Cys20/Cys26, Cys25/Cys50, and Cys38/Cys57. The Cell attachment site signature appears at 42 to 44 (RGD).

This sequence belongs to the venom metalloproteinase (M12B) family. P-II subfamily. P-IIe sub-subfamily. As to quaternary structure, heterodimer with subunit alpha; disulfide-linked. As to expression, expressed by the venom gland.

Its subcellular location is the secreted. Potently inhibits adhesion of alpha-4/beta-1 (ITGA4/ITGB1) and alpha-9/beta-1 (ITGA9/ITGB1) integrins to VCAM1, and adhesion of alpha-5/beta-1 (ITGA5/ITGB1) integrin to fibronectin. Has a much less effect on alpha-IIb/beta-3 (ITGA2B/ITGB3) integrin. Also potently inhibits neutrophil migration across TNF-alpha-activated human umbilical endothelial cells. This is Disintegrin EC6 subunit beta from Echis carinatus sochureki (Saw-scaled viper).